Consider the following 338-residue polypeptide: MTKKYNIAVIGATGNVGRETLNILAERHFPINKIYAIASNNSLGREVRFGAKILHINSLTIFNFYDIDIAFFCAGSNVSKEFIPKATADNCIVIDKTSLFRTDNQVPLIVPEANLSTLKEFNTKNIIANPNCIVIPLVVALKPLDNEIKIKRVVISTYQSVSGAGKAGMDELYDQTKSKYVFRENNPQKFPKQIAFNLFPHIGDFNKDGYTTEETKIAFELSKIMGTHFKTSVTSVRVPVFIGHAISVNIEFSNKIYAKDVEEILQDADGIVTISNNNDLAYISPIEVVGKDAVYVSRIRNDLSKENTINLWITCDNLRKGAALNSVQIAEELINNYL.

Residues 13 to 16 (TGNV) and 41 to 42 (NS) contribute to the NADP(+) site. Residue Arg-101 participates in phosphate binding. Catalysis depends on Cys-132, which acts as the Acyl-thioester intermediate. A substrate-binding site is contributed by Gln-159. Residues 162–163 (SG) and Pro-187 each bind NADP(+). Lys-216 provides a ligand contact to phosphate. Arg-237 is a substrate binding site. His-244 (proton acceptor) is an active-site residue. Asn-317 contributes to the NADP(+) binding site.

The protein belongs to the aspartate-semialdehyde dehydrogenase family. In terms of assembly, homodimer.

The catalysed reaction is L-aspartate 4-semialdehyde + phosphate + NADP(+) = 4-phospho-L-aspartate + NADPH + H(+). The protein operates within amino-acid biosynthesis; L-lysine biosynthesis via DAP pathway; (S)-tetrahydrodipicolinate from L-aspartate: step 2/4. It functions in the pathway amino-acid biosynthesis; L-methionine biosynthesis via de novo pathway; L-homoserine from L-aspartate: step 2/3. It participates in amino-acid biosynthesis; L-threonine biosynthesis; L-threonine from L-aspartate: step 2/5. In terms of biological role, catalyzes the NADPH-dependent formation of L-aspartate-semialdehyde (L-ASA) by the reductive dephosphorylation of L-aspartyl-4-phosphate. This chain is Aspartate-semialdehyde dehydrogenase, found in Rickettsia typhi (strain ATCC VR-144 / Wilmington).